The sequence spans 444 residues: MSKTYHFIGIKGSGMSALALMLHQMGHKVQGSDVEKYYFTQRGLEQAGITILPFDEKNLDGDMEIIAGNAFRPDNNVEIAYADQNGISYKRYHEFLGSFMRDFVSMGVAGAHGKTSTTGMLSHVLSHITDTSFLIGDGTGRGSANAKYFVFESDEYERHFMPYHPEYSIITNIDFDHPDYFTSLEDVFNAFNDYAKQITKGLFVYGEDAELRKITSDAPIYYYGFEAEGNDFVASDLIRSTTGSTFTVHFRGQNLGQFHIPTFGRHNIMNATAVIGLLYTAGFDLNLVREHLKTFSGVKRRFTEKIVNDTVIIDDFAHHPTEIIATLDAARQKYPSKEIVAVFQPHTFTRTIALLDDFAHALNQADAVYLAQIYGSAREVDHGDVKVEDLANKINKKHQVITVENVSPLLDHDNAVYVFMGAGDIQTYEYSFERLLSNLTSNVQ.

An ATP-binding site is contributed by 110-116 (GAHGKTS).

The protein belongs to the MurCDEF family.

It localises to the cytoplasm. The catalysed reaction is UDP-N-acetyl-alpha-D-muramate + L-alanine + ATP = UDP-N-acetyl-alpha-D-muramoyl-L-alanine + ADP + phosphate + H(+). It functions in the pathway cell wall biogenesis; peptidoglycan biosynthesis. Cell wall formation. The chain is UDP-N-acetylmuramate--L-alanine ligase from Streptococcus pneumoniae (strain P1031).